The following is a 569-amino-acid chain: Aspartokinase 1, chloroplastic (569 aa).

A chloroplast-targeting transit peptide spans 1–90 (MAATRVRCCH…VDEKGITCVM (90 aa)). Lys-91, Gly-94, and Ser-123 together coordinate ATP. Glu-207 contacts substrate. ACT domains are found at residues 405-483 (IAST…AIIS) and 484-560 (LIGN…GNGS). L-lysine-binding residues include Gln-413 and Gly-415. Ser-430 contacts S-adenosyl-L-methionine. Positions 431, 432, and 437 each coordinate L-lysine. S-adenosyl-L-methionine is bound by residues Ser-452 and Arg-453.

Belongs to the aspartokinase family. As to quaternary structure, homodimer.

It is found in the plastid. The protein resides in the chloroplast. The catalysed reaction is L-aspartate + ATP = 4-phospho-L-aspartate + ADP. Its pathway is amino-acid biosynthesis; L-lysine biosynthesis via DAP pathway; (S)-tetrahydrodipicolinate from L-aspartate: step 1/4. It functions in the pathway amino-acid biosynthesis; L-methionine biosynthesis via de novo pathway; L-homoserine from L-aspartate: step 1/3. The protein operates within amino-acid biosynthesis; L-threonine biosynthesis; L-threonine from L-aspartate: step 1/5. With respect to regulation, inhibited by S-adenosyl-L-methionine (SAM) and lysine in a synergistic manner. No inhibition by threonine, leucine or SAM alone, and no activation or inhibition by alanine, cysteine, isoleucine, serine, valine, methionine, glutamine, asparagine, glutamic acid or arginine. Involved in the first step of essential amino acids lysine, threonine, methionine and isoleucine synthesis via the aspartate-family pathway. The protein is Aspartokinase 1, chloroplastic (AK1) of Arabidopsis thaliana (Mouse-ear cress).